The sequence spans 987 residues: Leucine--tRNA ligase (987 aa).

The 'HIGH' region motif lies at 69 to 80; that stretch reads PYPSGKGLHVGH. The 'KMSKS' region signature appears at 760-764; the sequence is KMGKS. Lys763 serves as a coordination point for ATP.

Belongs to the class-I aminoacyl-tRNA synthetase family.

Its subcellular location is the cytoplasm. It carries out the reaction tRNA(Leu) + L-leucine + ATP = L-leucyl-tRNA(Leu) + AMP + diphosphate. The chain is Leucine--tRNA ligase from Bifidobacterium longum (strain NCC 2705).